The primary structure comprises 297 residues: Protein CANDIDATE G-PROTEIN COUPLED RECEPTOR 8 (297 aa).

Asn20 carries an N-linked (GlcNAc...) asparagine glycan. Transmembrane regions (helical) follow at residues 34–54, 70–90, 107–127, 142–162, 180–200, 215–235, and 242–262; these read GFLHNTVLVAASLFFVAYLAY, IMIAYYGCLWLVSLLNLAWCC, LTLFTTSGMLFLEVSLVAFLF, FLISGFIVALDLLLKAIFLFG, WGLWIIHKLLLTGVYGMVFLM, FYNYIIIMFALYSLYLVASAF, and FGFWLYGIMSVCYHALYLPLL.

This sequence belongs to the UPF0359 family.

The protein resides in the membrane. Its function is as follows. G-protein coupled receptor. Plays a role in plants and microbes interactions. The sequence is that of Protein CANDIDATE G-PROTEIN COUPLED RECEPTOR 8 from Arabidopsis thaliana (Mouse-ear cress).